We begin with the raw amino-acid sequence, 101 residues long: Small ribosomal subunit protein uS10 (101 aa).

It belongs to the universal ribosomal protein uS10 family. In terms of assembly, part of the 30S ribosomal subunit.

Functionally, involved in the binding of tRNA to the ribosomes. The polypeptide is Small ribosomal subunit protein uS10 (Cytophaga hutchinsonii (strain ATCC 33406 / DSM 1761 / CIP 103989 / NBRC 15051 / NCIMB 9469 / D465)).